Consider the following 446-residue polypeptide: Probable 1,4-beta-D-glucan cellobiohydrolase A (446 aa).

A signal peptide spans 1-17; that stretch reads MYQRALLFSALLSVSRA. The N-linked (GlcNAc...) asparagine glycan is linked to asparagine 81. Glutamate 226 functions as the Nucleophile in the catalytic mechanism. Glutamate 231 serves as the catalytic Proton donor. N-linked (GlcNAc...) asparagine glycosylation is found at asparagine 284 and asparagine 333. The segment at 399–420 is disordered; it reads TDADPSQPGVARGTCEQGAGDP.

This sequence belongs to the glycosyl hydrolase 7 (cellulase C) family.

It is found in the secreted. It carries out the reaction Hydrolysis of (1-&gt;4)-beta-D-glucosidic linkages in cellulose and cellotetraose, releasing cellobiose from the non-reducing ends of the chains.. Its function is as follows. The biological conversion of cellulose to glucose generally requires three types of hydrolytic enzymes: (1) Endoglucanases which cut internal beta-1,4-glucosidic bonds; (2) Exocellobiohydrolases that cut the disaccharide cellobiose from the non-reducing end of the cellulose polymer chain; (3) Beta-1,4-glucosidases which hydrolyze the cellobiose and other short cello-oligosaccharides to glucose. The sequence is that of Probable 1,4-beta-D-glucan cellobiohydrolase A (cbhA) from Emericella nidulans (strain FGSC A4 / ATCC 38163 / CBS 112.46 / NRRL 194 / M139) (Aspergillus nidulans).